Reading from the N-terminus, the 379-residue chain is Succinate--CoA ligase [ADP-forming] subunit beta (379 aa).

One can recognise an ATP-grasp domain in the interval 9–236 (KEIARKYGIE…GRDATPYEKV (228 aa)). Residues lysine 46, 53–55 (GRG), glutamate 92, valine 95, and glutamate 100 each bind ATP. Mg(2+) is bound by residues asparagine 192 and aspartate 206. Substrate-binding positions include asparagine 256 and 313–315 (GIT).

This sequence belongs to the succinate/malate CoA ligase beta subunit family. Heterotetramer of two alpha and two beta subunits. Mg(2+) serves as cofactor.

It carries out the reaction succinate + ATP + CoA = succinyl-CoA + ADP + phosphate. The catalysed reaction is GTP + succinate + CoA = succinyl-CoA + GDP + phosphate. Its pathway is carbohydrate metabolism; tricarboxylic acid cycle; succinate from succinyl-CoA (ligase route): step 1/1. Succinyl-CoA synthetase functions in the citric acid cycle (TCA), coupling the hydrolysis of succinyl-CoA to the synthesis of either ATP or GTP and thus represents the only step of substrate-level phosphorylation in the TCA. The beta subunit provides nucleotide specificity of the enzyme and binds the substrate succinate, while the binding sites for coenzyme A and phosphate are found in the alpha subunit. In Desulfurococcus amylolyticus (strain DSM 18924 / JCM 16383 / VKM B-2413 / 1221n) (Desulfurococcus kamchatkensis), this protein is Succinate--CoA ligase [ADP-forming] subunit beta.